A 476-amino-acid polypeptide reads, in one-letter code: RNA-binding protein 45 (476 aa).

Positions 1–20 (MDEAGSSASGGGFRPGVDSL) are disordered. 2 consecutive RRM domains span residues 26 to 106 (SRIF…IAQS) and 121 to 195 (TRIF…PKNK). Residue K34 forms a Glycyl lysine isopeptide (Lys-Gly) (interchain with G-Cter in SUMO2) linkage. S199 and S464 each carry phosphoserine. The RRM 3 domain occupies 392–464 (ERLFIVFNPH…VRLKVMLADS (73 aa)).

Its subcellular location is the cytoplasm. The protein localises to the nucleus. Its function is as follows. RNA-binding protein with binding specificity for poly(C). May play an important role in neural development. The protein is RNA-binding protein 45 (RBM45) of Homo sapiens (Human).